We begin with the raw amino-acid sequence, 168 residues long: Vitelline membrane protein Vm26Ab (168 aa).

The N-terminal stretch at 1 to 23 is a signal peptide; sequence MAFNFGHLLIAGLVALSAVSSET. Positions 24–42 are cleaved as a propeptide — removed between stage 11 and 14 of oogenesis; sequence IQLQPTQGILIPAPLAENI. The segment at 43–46 is essential for N-terminal propeptide removal. Potential serine protease cleavage site; sequence RVSR. Residues 52-119 are 8 X 8 AA approximate repeats of P-[AS]-Y-S-A-P-A-[AS]; that stretch reads YGAAPAAPSY…PAYSAPASIP (68 aa). The 1; half-length repeat unit spans residues 55–58; sequence APAA. Copy 2 of the repeat occupies 59–66; that stretch reads PSYSAPAA. One copy of the 3; approximate repeat lies at 70–77; sequence QAYSAPAA. 5 repeat units span residues 78–85, 86–93, 94–101, 102–109, and 110–117. One can recognise a VM domain in the interval 117 to 154; sequence SIPSPPCPKNYLFSCQPSLQPVPCSAPAQSYGSAGAYS. Residues 155-168 constitute a propeptide, removed between stage 9 and 12 of oogenesis; the sequence is QYVPQYAVPFVREL.

The protein belongs to the vitelline membrane protein family. As to quaternary structure, interacts with vml and Vm26Aa; forms part of a disulfide-linked network within the vitelline membrane of stage 10 egg chambers. Proteolytically processed after secretion into the perivitelline space. Undergoes several proteolytic processing steps during formation of the vitelline membrane; an initial processing step removing a C-terminal propeptide occurs between stage 9 and 12 of oogenesis while a second removing a N-terminal propeptide occurs between stage 11 and 14. Post-translationally, becomes part of a disulfide-linked network including other vitelline membrane proteins, including vml and Vm26Aa, during vitelline membrane biogenesis and maturation. Cys-123, Cys-131 and Cys-140 are involved in disulfide network formation, with Cys-131 being the most important. Undergoes both disulfide and non-disulfide cross-linking upon incorporation into the vitelline membrane. As to expression, follicle cells.

The protein resides in the secreted. It localises to the extracellular space. The protein localises to the extracellular matrix. Its function is as follows. Major early eggshell protein secreted by follicle cells into the perivitelline space and incorporated into the vitelline membrane. Involved in vitelline membrane biogenesis; forms a cross-linked network with other vitelline membrane components. In Drosophila melanogaster (Fruit fly), this protein is Vitelline membrane protein Vm26Ab.